Here is a 283-residue protein sequence, read N- to C-terminus: Pantothenate synthetase (283 aa).

30 to 37 (MGFLHEGH) is a binding site for ATP. Histidine 37 functions as the Proton donor in the catalytic mechanism. Position 61 (glutamine 61) interacts with (R)-pantoate. Residue glutamine 61 participates in beta-alanine binding. 147 to 150 (GKKD) provides a ligand contact to ATP. Glutamine 153 provides a ligand contact to (R)-pantoate. Residues valine 176 and 184 to 187 (MSSR) each bind ATP.

It belongs to the pantothenate synthetase family. As to quaternary structure, homodimer.

It localises to the cytoplasm. It catalyses the reaction (R)-pantoate + beta-alanine + ATP = (R)-pantothenate + AMP + diphosphate + H(+). Its pathway is cofactor biosynthesis; (R)-pantothenate biosynthesis; (R)-pantothenate from (R)-pantoate and beta-alanine: step 1/1. Functionally, catalyzes the condensation of pantoate with beta-alanine in an ATP-dependent reaction via a pantoyl-adenylate intermediate. The chain is Pantothenate synthetase from Trichlorobacter lovleyi (strain ATCC BAA-1151 / DSM 17278 / SZ) (Geobacter lovleyi).